A 686-amino-acid polypeptide reads, in one-letter code: Band 4.1-like protein 4A (686 aa).

In terms of domain architecture, FERM spans 11–299 (FYCEVLLLDE…EHHTFFRMPE (289 aa)). The residue at position 304 (Ser-304) is a Phosphoserine. A disordered region spans residues 331–686 (RDLSIQLPRP…IQASRLKTET (356 aa)). Positions 357-376 (AQTQPAESNSISRITANMEN) are enriched in polar residues. A phosphoserine mark is found at Ser-389, Ser-393, and Ser-402. The segment covering 418-428 (GPQSGLYNSPS) has biased composition (polar residues). Residues 479–489 (RCNTSSGSESE) are compositionally biased toward low complexity. Basic and acidic residues-rich tracts occupy residues 518–527 (VLRRQKEKNQ) and 547–561 (QAKEELWKHIQKELV). Residues 588–601 (IRHSHSPRSYRQYR) show a composition bias toward basic residues. The segment covering 648-658 (GSKDSLMEEKP) has biased composition (basic and acidic residues). A compositionally biased stretch (polar residues) spans 673–686 (TIKTIQASRLKTET).

In terms of tissue distribution, expressed in many tissues. High levels of expression in brain, liver, thymus and peripheral blood leukocytes and low levels of expression in heart, kidney, testis and colon.

The protein resides in the cytoplasm. It is found in the cytoskeleton. This Homo sapiens (Human) protein is Band 4.1-like protein 4A.